The sequence spans 691 residues: Methionine--tRNA ligase (691 aa).

The 'HIGH' region motif lies at 14-24 (PYANGPFHLGH). The Zn(2+) site is built by C148, C151, C161, and C164. The 'KMSKS' region signature appears at 344–348 (KMSKS). K347 provides a ligand contact to ATP. Residues 585–691 (DFDRVDLRVA…PGAKPGMRVR (107 aa)) enclose the tRNA-binding domain.

The protein belongs to the class-I aminoacyl-tRNA synthetase family. MetG type 1 subfamily. Homodimer. Zn(2+) serves as cofactor.

It is found in the cytoplasm. The enzyme catalyses tRNA(Met) + L-methionine + ATP = L-methionyl-tRNA(Met) + AMP + diphosphate. Functionally, is required not only for elongation of protein synthesis but also for the initiation of all mRNA translation through initiator tRNA(fMet) aminoacylation. This chain is Methionine--tRNA ligase, found in Verminephrobacter eiseniae (strain EF01-2).